A 142-amino-acid chain; its full sequence is Putative pre-16S rRNA nuclease (142 aa).

Belongs to the YqgF nuclease family.

Its subcellular location is the cytoplasm. Could be a nuclease involved in processing of the 5'-end of pre-16S rRNA. This Azotobacter vinelandii (strain DJ / ATCC BAA-1303) protein is Putative pre-16S rRNA nuclease.